The chain runs to 682 residues: Potassium-transporting ATPase ATP-binding subunit (682 aa).

A run of 4 helical transmembrane segments spans residues 34 to 54, 62 to 82, 219 to 239, and 254 to 274; these read PVMF…IAMA, ALFS…ANFA, IALT…TATL, and VLVA…LSAI. Catalysis depends on D307, which acts as the 4-aspartylphosphate intermediate. ATP contacts are provided by residues D344, E348, 377 to 384, and K395; that span reads FTAQSRMS. Mg(2+) is bound by residues D518 and D522. 3 helical membrane-spanning segments follow: residues 588 to 608, 616 to 636, and 656 to 676; these read FAII…LNIM, AILS…PLAL, and IYGL…DLLL.

The protein belongs to the cation transport ATPase (P-type) (TC 3.A.3) family. Type IA subfamily. As to quaternary structure, the system is composed of three essential subunits: KdpA, KdpB and KdpC.

It is found in the cell inner membrane. The enzyme catalyses K(+)(out) + ATP + H2O = K(+)(in) + ADP + phosphate + H(+). Part of the high-affinity ATP-driven potassium transport (or Kdp) system, which catalyzes the hydrolysis of ATP coupled with the electrogenic transport of potassium into the cytoplasm. This subunit is responsible for energy coupling to the transport system and for the release of the potassium ions to the cytoplasm. The protein is Potassium-transporting ATPase ATP-binding subunit of Escherichia coli (strain SMS-3-5 / SECEC).